A 129-amino-acid polypeptide reads, in one-letter code: uncharacterized protein (129 aa).

Residues 1–28 lie on the Cytoplasmic side of the membrane; sequence MAGTLFIILRFVDTTLPSSRVYCVRSLE. Residues 29-49 form a helical membrane-spanning segment; the sequence is VSVAVELAAATVLAFESIGVV. Residues 50–54 are Extracellular-facing; sequence DDCGR. Residues 55-75 traverse the membrane as a helical segment; it reads SVLFSIILIAAFICSVFLIAS. The Cytoplasmic segment spans residues 76 to 129; the sequence is EDIAGSRRSTGSCVTLWEGRNISFCLYRSNWLNTVPVGYMFFLRKNRSLDERYF.

The protein localises to the membrane. This is an uncharacterized protein from Saccharomyces cerevisiae (strain ATCC 204508 / S288c) (Baker's yeast).